A 41-amino-acid chain; its full sequence is Large ribosomal subunit protein bL36 (41 aa).

Belongs to the bacterial ribosomal protein bL36 family.

This is Large ribosomal subunit protein bL36 from Erythrobacter litoralis (strain HTCC2594).